The chain runs to 105 residues: DNA-directed RNA polymerase subunit omega (105 aa).

Belongs to the RNA polymerase subunit omega family. As to quaternary structure, the RNAP catalytic core consists of 2 alpha, 1 beta, 1 beta' and 1 omega subunit. When a sigma factor is associated with the core the holoenzyme is formed, which can initiate transcription.

The enzyme catalyses RNA(n) + a ribonucleoside 5'-triphosphate = RNA(n+1) + diphosphate. Functionally, promotes RNA polymerase assembly. Latches the N- and C-terminal regions of the beta' subunit thereby facilitating its interaction with the beta and alpha subunits. This is DNA-directed RNA polymerase subunit omega from Streptococcus pyogenes serotype M12 (strain MGAS2096).